Reading from the N-terminus, the 129-residue chain is Large ribosomal subunit protein uL22 (129 aa).

The protein belongs to the universal ribosomal protein uL22 family. Part of the 50S ribosomal subunit.

Functionally, this protein binds specifically to 23S rRNA; its binding is stimulated by other ribosomal proteins, e.g. L4, L17, and L20. It is important during the early stages of 50S assembly. It makes multiple contacts with different domains of the 23S rRNA in the assembled 50S subunit and ribosome. The globular domain of the protein is located near the polypeptide exit tunnel on the outside of the subunit, while an extended beta-hairpin is found that lines the wall of the exit tunnel in the center of the 70S ribosome. This is Large ribosomal subunit protein uL22 from Agrobacterium fabrum (strain C58 / ATCC 33970) (Agrobacterium tumefaciens (strain C58)).